Consider the following 529-residue polypeptide: Glucose-6-phosphate isomerase (529 aa).

Glu-322 functions as the Proton donor in the catalytic mechanism. Residues His-351 and Lys-455 contribute to the active site.

This sequence belongs to the GPI family.

It localises to the cytoplasm. The enzyme catalyses alpha-D-glucose 6-phosphate = beta-D-fructose 6-phosphate. Its pathway is carbohydrate biosynthesis; gluconeogenesis. The protein operates within carbohydrate degradation; glycolysis; D-glyceraldehyde 3-phosphate and glycerone phosphate from D-glucose: step 2/4. Functionally, catalyzes the reversible isomerization of glucose-6-phosphate to fructose-6-phosphate. This is Glucose-6-phosphate isomerase from Acaryochloris marina (strain MBIC 11017).